Consider the following 295-residue polypeptide: Secreted frizzled-related protein 2 (295 aa).

The first 24 residues, Met1–Gly24, serve as a signal peptide directing secretion. The 121-residue stretch at Tyr35–Leu155 folds into the FZ domain. Disulfide bonds link Cys40–Cys103, Cys50–Cys96, Cys87–Cys125, Cys114–Cys152, Cys118–Cys142, Cys172–Cys245, Cys175–Cys247, and Cys190–Cys295. Residues Cys172–Cys295 enclose the NTR domain.

Belongs to the secreted frizzled-related protein (sFRP) family. As to expression, expressed in adipose tissue, heart, brain, skeletal muscle, pancreas, thymus, prostate, testis, ovary, small intestine and colon. Highest levels in adipose tissue, small intestine and colon.

The protein localises to the secreted. Its function is as follows. Soluble frizzled-related proteins (sFRPS) function as modulators of Wnt signaling through direct interaction with Wnts. They have a role in regulating cell growth and differentiation in specific cell types. SFRP2 may be important for eye retinal development and for myogenesis. This chain is Secreted frizzled-related protein 2 (SFRP2), found in Homo sapiens (Human).